Here is a 330-residue protein sequence, read N- to C-terminus: Glycerol-3-phosphate dehydrogenase [NAD(P)+] (330 aa).

The NADPH site is built by serine 11, phenylalanine 12, arginine 32, and lysine 106. Sn-glycerol 3-phosphate-binding residues include lysine 106, glycine 133, and serine 135. Alanine 137 serves as a coordination point for NADPH. Sn-glycerol 3-phosphate contacts are provided by lysine 188, aspartate 241, serine 251, arginine 252, and asparagine 253. The active-site Proton acceptor is the lysine 188. NADPH is bound at residue arginine 252. The NADPH site is built by valine 276 and glutamate 278.

The protein belongs to the NAD-dependent glycerol-3-phosphate dehydrogenase family.

Its subcellular location is the cytoplasm. The catalysed reaction is sn-glycerol 3-phosphate + NAD(+) = dihydroxyacetone phosphate + NADH + H(+). It carries out the reaction sn-glycerol 3-phosphate + NADP(+) = dihydroxyacetone phosphate + NADPH + H(+). The protein operates within membrane lipid metabolism; glycerophospholipid metabolism. Functionally, catalyzes the reduction of the glycolytic intermediate dihydroxyacetone phosphate (DHAP) to sn-glycerol 3-phosphate (G3P), the key precursor for phospholipid synthesis. The protein is Glycerol-3-phosphate dehydrogenase [NAD(P)+] of Clostridium botulinum (strain Alaska E43 / Type E3).